Consider the following 656-residue polypeptide: Methylenetetrahydrofolate reductase (NADPH) (656 aa).

Residues 1 to 12 (MVNEARGNSSLN) are compositionally biased toward polar residues. The interval 1–44 (MVNEARGNSSLNPCLEGSASSGSESSKDSSRCSTPGLDPERHER) is disordered. 10 positions are modified to phosphoserine: Ser-9, Ser-10, Ser-18, Ser-20, Ser-21, Ser-23, Ser-25, Ser-26, Ser-29, and Ser-30. Residue Thr-34 is modified to Phosphothreonine. Glu-63 (proton donor/acceptor) is an active-site residue. 63–68 (EFFPPR) lines the NAD(+) pocket. Tyr-90 bears the Phosphotyrosine mark. Thr-94 carries the phosphothreonine modification. Residue 94–95 (TW) coordinates NAD(+). 94–95 (TW) contacts FAD. Position 103 is a phosphoserine (Ser-103). FAD-binding positions include His-127, 157-159 (RGD), 174-175 (YA), Tyr-197, 201-204 (HPEA), Asp-210, and Lys-217. Asp-159 contributes to the substrate binding site. Positions 228, 321, and 325 each coordinate substrate. Phosphoserine is present on Ser-394. The residue at position 451 (Thr-451) is a Phosphothreonine. Residues Asn-456, 461 to 464 (AAET), 481 to 485 (TINSQ), Thr-560, and Thr-573 contribute to the S-adenosyl-L-methionine site.

It belongs to the methylenetetrahydrofolate reductase family. In terms of assembly, homodimer. FAD is required as a cofactor. In terms of processing, phosphorylation of an N-terminal serine-rich phosphorylation region increases sensitivity to S-adenosylmethionine and inhibition.

It catalyses the reaction (6S)-5-methyl-5,6,7,8-tetrahydrofolate + NADP(+) = (6R)-5,10-methylene-5,6,7,8-tetrahydrofolate + NADPH + H(+). Its pathway is one-carbon metabolism; tetrahydrofolate interconversion. Allosterically regulated by S-adenosylmethionine (SAM). In terms of biological role, catalyzes the conversion of 5,10-methylenetetrahydrofolate to 5-methyltetrahydrofolate, a cosubstrate for homocysteine remethylation to methionine. Represents a key regulatory connection between the folate and methionine cycles. The protein is Methylenetetrahydrofolate reductase (NADPH) of Homo sapiens (Human).